The following is a 144-amino-acid chain: Small ribosomal subunit protein uS12 (144 aa).

The disordered stretch occupies residues 1–55 (MPTINQLVRKGREDKVVKSKSPALQKGYNSFKKSQTNQSSPQKRGVCTRVGTMTP). Residues 27–42 (GYNSFKKSQTNQSSPQ) are compositionally biased toward polar residues. The residue at position 102 (aspartate 102) is a 3-methylthioaspartic acid. Positions 119 to 144 (GVNNRKQGRSKYGTKRPKPGQAAAKK) are disordered. Basic residues predominate over residues 124–144 (KQGRSKYGTKRPKPGQAAAKK).

The protein belongs to the universal ribosomal protein uS12 family. As to quaternary structure, part of the 30S ribosomal subunit. Contacts proteins S8 and S17. May interact with IF1 in the 30S initiation complex.

In terms of biological role, with S4 and S5 plays an important role in translational accuracy. Interacts with and stabilizes bases of the 16S rRNA that are involved in tRNA selection in the A site and with the mRNA backbone. Located at the interface of the 30S and 50S subunits, it traverses the body of the 30S subunit contacting proteins on the other side and probably holding the rRNA structure together. The combined cluster of proteins S8, S12 and S17 appears to hold together the shoulder and platform of the 30S subunit. The polypeptide is Small ribosomal subunit protein uS12 (Brevibacillus brevis (strain 47 / JCM 6285 / NBRC 100599)).